A 430-amino-acid polypeptide reads, in one-letter code: Tryptophan synthase beta chain (430 aa).

Lys-95 carries the N6-(pyridoxal phosphate)lysine modification.

Belongs to the TrpB family. As to quaternary structure, tetramer of two alpha and two beta chains. The cofactor is pyridoxal 5'-phosphate.

It catalyses the reaction (1S,2R)-1-C-(indol-3-yl)glycerol 3-phosphate + L-serine = D-glyceraldehyde 3-phosphate + L-tryptophan + H2O. It participates in amino-acid biosynthesis; L-tryptophan biosynthesis; L-tryptophan from chorismate: step 5/5. Functionally, the beta subunit is responsible for the synthesis of L-tryptophan from indole and L-serine. The protein is Tryptophan synthase beta chain of Halobacterium salinarum (strain ATCC 29341 / DSM 671 / R1).